A 367-amino-acid polypeptide reads, in one-letter code: tRNA/tmRNA (uracil-C(5))-methyltransferase (367 aa).

Q190, Y218, N223, E239, and D299 together coordinate S-adenosyl-L-methionine. Residue C324 is the Nucleophile of the active site. E358 acts as the Proton acceptor in catalysis.

The protein belongs to the class I-like SAM-binding methyltransferase superfamily. RNA M5U methyltransferase family. TrmA subfamily.

The enzyme catalyses uridine(54) in tRNA + S-adenosyl-L-methionine = 5-methyluridine(54) in tRNA + S-adenosyl-L-homocysteine + H(+). It carries out the reaction uridine(341) in tmRNA + S-adenosyl-L-methionine = 5-methyluridine(341) in tmRNA + S-adenosyl-L-homocysteine + H(+). Functionally, dual-specificity methyltransferase that catalyzes the formation of 5-methyluridine at position 54 (m5U54) in all tRNAs, and that of position 341 (m5U341) in tmRNA (transfer-mRNA). This is tRNA/tmRNA (uracil-C(5))-methyltransferase from Yersinia pestis bv. Antiqua (strain Antiqua).